The following is a 50-amino-acid chain: F420-non-reducing hydrogenase vhu subunit U (50 aa).

Ni(2+)-binding residues include Sec27 and Cys30. Residue Sec27 is a non-standard amino acid, selenocysteine. A propeptide spans 34–50 (IIVKDEKGNKIIEVIKE) (removed in mature form).

It belongs to the [NiFe]/[NiFeSe] hydrogenase large subunit family. The F420-non-reducing hydrogenase vhu is composed of four subunits; VhuA, VhuD, VhuG and VhuU. The cofactor is Ni(2+).

The chain is F420-non-reducing hydrogenase vhu subunit U (vhuU) from Methanocaldococcus jannaschii (strain ATCC 43067 / DSM 2661 / JAL-1 / JCM 10045 / NBRC 100440) (Methanococcus jannaschii).